Here is a 317-residue protein sequence, read N- to C-terminus: tRNA(Met) cytidine acetate ligase (317 aa).

ATP is bound by residues 6–19 (IAEYNPFHNGHIYQ), glycine 100, asparagine 157, and arginine 182.

This sequence belongs to the TmcAL family.

It localises to the cytoplasm. It carries out the reaction cytidine(34) in elongator tRNA(Met) + acetate + ATP = N(4)-acetylcytidine(34) in elongator tRNA(Met) + AMP + diphosphate. Catalyzes the formation of N(4)-acetylcytidine (ac(4)C) at the wobble position of elongator tRNA(Met), using acetate and ATP as substrates. First activates an acetate ion to form acetyladenylate (Ac-AMP) and then transfers the acetyl group to tRNA to form ac(4)C34. In Mesomycoplasma hyopneumoniae (strain 232) (Mycoplasma hyopneumoniae), this protein is tRNA(Met) cytidine acetate ligase.